The following is a 318-amino-acid chain: Aspartate carbamoyltransferase catalytic subunit (318 aa).

The carbamoyl phosphate site is built by Arg-56 and Thr-57. Lys-84 serves as a coordination point for L-aspartate. Carbamoyl phosphate-binding residues include Arg-106, His-143, and Gln-146. Residues Arg-176 and Arg-230 each contribute to the L-aspartate site. Carbamoyl phosphate-binding residues include Gly-271 and Pro-272.

This sequence belongs to the aspartate/ornithine carbamoyltransferase superfamily. ATCase family. Heterododecamer (2C3:3R2) of six catalytic PyrB chains organized as two trimers (C3), and six regulatory PyrI chains organized as three dimers (R2).

It carries out the reaction carbamoyl phosphate + L-aspartate = N-carbamoyl-L-aspartate + phosphate + H(+). It functions in the pathway pyrimidine metabolism; UMP biosynthesis via de novo pathway; (S)-dihydroorotate from bicarbonate: step 2/3. In terms of biological role, catalyzes the condensation of carbamoyl phosphate and aspartate to form carbamoyl aspartate and inorganic phosphate, the committed step in the de novo pyrimidine nucleotide biosynthesis pathway. This chain is Aspartate carbamoyltransferase catalytic subunit, found in Mycobacterium avium (strain 104).